The following is a 524-amino-acid chain: Metal transporter Nramp2 (524 aa).

Residues 34–58 are disordered; the sequence is AYDSDDKVSIAVSDSDSEDGGGGGG. A run of 12 helical transmembrane segments spans residues 70–90, 98–118, 155–175, 179–199, 207–227, 253–273, 295–315, 341–361, 389–409, 420–440, 457–477, and 486–506; these read LWRF…PGNL, AAAG…GALV, LALV…IKIL, TVPL…FLFL, LEAF…IMFG, AVGI…SALV, IESI…TTVF, YGTA…ASGQ, AMIT…FFDT, ALNV…ITLV, VISW…ILSF, and LVRS…VYLI.

The protein belongs to the NRAMP (TC 2.A.55) family.

It localises to the membrane. Its function is as follows. Probable metal transporter. The polypeptide is Metal transporter Nramp2 (NRAMP2) (Oryza sativa subsp. japonica (Rice)).